The following is a 332-amino-acid chain: Holliday junction branch migration complex subunit RuvB (332 aa).

The segment at 1–181 is large ATPase domain (RuvB-L); the sequence is MSRILDNEMM…FGITGHMEYY (181 aa). Residues Leu20, Arg21, Gly62, Lys65, Thr66, Thr67, 128 to 130, Arg171, Tyr181, and Arg218 contribute to the ATP site; that span reads EDF. Thr66 is a binding site for Mg(2+). Residues 182–252 are small ATPAse domain (RuvB-S); the sequence is AHADLTEIVE…ITDKALTMLD (71 aa). The segment at 255 to 332 is head domain (RuvB-H); that stretch reads HEGLDYVDQK…EHLGYEYSEK (78 aa). DNA-binding residues include Arg291, Arg310, Arg312, and Arg315.

Belongs to the RuvB family. Homohexamer. Forms an RuvA(8)-RuvB(12)-Holliday junction (HJ) complex. HJ DNA is sandwiched between 2 RuvA tetramers; dsDNA enters through RuvA and exits via RuvB. An RuvB hexamer assembles on each DNA strand where it exits the tetramer. Each RuvB hexamer is contacted by two RuvA subunits (via domain III) on 2 adjacent RuvB subunits; this complex drives branch migration. In the full resolvosome a probable DNA-RuvA(4)-RuvB(12)-RuvC(2) complex forms which resolves the HJ.

The protein localises to the cytoplasm. The catalysed reaction is ATP + H2O = ADP + phosphate + H(+). In terms of biological role, the RuvA-RuvB-RuvC complex processes Holliday junction (HJ) DNA during genetic recombination and DNA repair, while the RuvA-RuvB complex plays an important role in the rescue of blocked DNA replication forks via replication fork reversal (RFR). RuvA specifically binds to HJ cruciform DNA, conferring on it an open structure. The RuvB hexamer acts as an ATP-dependent pump, pulling dsDNA into and through the RuvAB complex. RuvB forms 2 homohexamers on either side of HJ DNA bound by 1 or 2 RuvA tetramers; 4 subunits per hexamer contact DNA at a time. Coordinated motions by a converter formed by DNA-disengaged RuvB subunits stimulates ATP hydrolysis and nucleotide exchange. Immobilization of the converter enables RuvB to convert the ATP-contained energy into a lever motion, pulling 2 nucleotides of DNA out of the RuvA tetramer per ATP hydrolyzed, thus driving DNA branch migration. The RuvB motors rotate together with the DNA substrate, which together with the progressing nucleotide cycle form the mechanistic basis for DNA recombination by continuous HJ branch migration. Branch migration allows RuvC to scan DNA until it finds its consensus sequence, where it cleaves and resolves cruciform DNA. The polypeptide is Holliday junction branch migration complex subunit RuvB (Streptococcus pneumoniae serotype 4 (strain ATCC BAA-334 / TIGR4)).